The primary structure comprises 228 residues: tRNA (carboxymethyluridine(34)-5-O)-methyltransferase (228 aa).

It is found in the cytoplasm. Its subcellular location is the nucleus. It catalyses the reaction 5-(carboxymethyl)uridine(34) in tRNA + S-adenosyl-L-methionine = 5-(2-methoxy-2-oxoethyl)uridine(34) in tRNA + S-adenosyl-L-homocysteine. Required for the methylation of the wobble bases at position 34 in tRNA. Appears to have a role in stress-response. The chain is tRNA (carboxymethyluridine(34)-5-O)-methyltransferase (trm9) from Schizosaccharomyces pombe (strain 972 / ATCC 24843) (Fission yeast).